We begin with the raw amino-acid sequence, 831 residues long: V-type proton ATPase subunit a (831 aa).

The Cytoplasmic portion of the chain corresponds to 1–418 (MSPSLFRSEE…DSYGIATYRE (418 aa)). The helical transmembrane segment at 419-437 (VNHGIVAIVTFPFLFAIMF) threads the bilayer. The Vacuolar segment spans residues 438–439 (GD). A helical membrane pass occupies residues 440–456 (LGHGAIMASVALMFVLY). Residues 457–471 (EKTLGAKKDLDEIVG) are Cytoplasmic-facing. A helical membrane pass occupies residues 472-501 (MVFYGRYIVLLMGLFSMYVGFVYNDLFSKP). Residues 502–548 (MSIFSSRWVWPVKSEEAIARAVQVGTYPIGIDPTWHSADNNLLFMNS) lie on the Vacuolar side of the membrane. A helical membrane pass occupies residues 549-568 (YKMKLSIILGVIHMTFCLFL). Over 569 to 586 (SLSNYRFFKRKLDIYAVF) the chain is Cytoplasmic. Residues 587–607 (VPSLIFLEAIFGYLVITIVYK) traverse the membrane as a helical segment. The Vacuolar portion of the chain corresponds to 608-650 (WCIDWKAKDLQPPSLLNMLILMFLSPGTLEDQLYPGQKYLQVG). Residues 651-670 (LVIAALICVPWLLIVKPFVL) form a helical membrane-spanning segment. The Cytoplasmic portion of the chain corresponds to 671–723 (WRRHSNEENKYQSLNSDLPNVDEADALMAVDSQEKQAEPFELGEVVIHQVIHT). A helical transmembrane segment spans residues 724–748 (IEFCLGCVSHTASYLRLWALSLAHN). The Vacuolar segment spans residues 749-769 (QLSSVLWNMTLANGFRMTGIV). The chain crosses the membrane as a helical span at residues 770–808 (GSIFVVILFGFWFIATCVVLVAMEGTSAMLHSLRLHWVE). The Cytoplasmic portion of the chain corresponds to 809–831 (GMSKHFEGEGYAFTPFTFKVTAE).

The protein belongs to the V-ATPase 116 kDa subunit family. As to quaternary structure, V-ATPase is a heteromultimeric enzyme composed of a peripheral catalytic V1 complex (components A to H) attached to an integral membrane V0 proton pore complex (components: a, c, c', c'', d, e, f and VOA1).

It localises to the vacuole membrane. Functionally, subunit of the V0 complex of vacuolar(H+)-ATPase (V-ATPase), a multisubunit enzyme composed of a peripheral complex (V1) that hydrolyzes ATP and a membrane integral complex (V0) that translocates protons. V-ATPase is responsible for acidifying and maintaining the pH of intracellular compartments. This is V-type proton ATPase subunit a (vph1) from Schizosaccharomyces pombe (strain 972 / ATCC 24843) (Fission yeast).